The primary structure comprises 354 residues: Protein FAM181A (354 aa).

2 stretches are compositionally biased toward basic and acidic residues: residues 1–14 and 129–142; these read MPLE…ERND and YLKR…RRLL. Disordered regions lie at residues 1-35, 117-160, and 172-193; these read MPLE…KQVS, LPRG…CKEK, and AKEQ…VPMR.

This sequence belongs to the FAM181 family.

The chain is Protein FAM181A (FAM181A) from Homo sapiens (Human).